The primary structure comprises 165 residues: Small ribosomal subunit protein uS5 (165 aa).

Residues 10 to 73 form the S5 DRBM domain; it reads QIEKLISLNR…TSARKNLRFV (64 aa).

This sequence belongs to the universal ribosomal protein uS5 family. As to quaternary structure, part of the 30S ribosomal subunit. Contacts proteins S4 and S8.

Functionally, with S4 and S12 plays an important role in translational accuracy. Located at the back of the 30S subunit body where it stabilizes the conformation of the head with respect to the body. This is Small ribosomal subunit protein uS5 from Borreliella burgdorferi (strain ATCC 35210 / DSM 4680 / CIP 102532 / B31) (Borrelia burgdorferi).